We begin with the raw amino-acid sequence, 212 residues long: Pyridoxine/pyridoxamine 5'-phosphate oxidase (212 aa).

Substrate is bound by residues arginine 8–tyrosine 11 and lysine 66. FMN contacts are provided by residues arginine 61–lysine 66, phenylalanine 76–threonine 77, lysine 83, and glutamine 105. Positions 123, 127, and 131 each coordinate substrate. Residues glutamine 140 to serine 141 and tryptophan 184 contribute to the FMN site. Arginine 190–histidine 192 contacts substrate. An FMN-binding site is contributed by arginine 194.

The protein belongs to the pyridoxamine 5'-phosphate oxidase family. As to quaternary structure, homodimer. FMN serves as cofactor.

The catalysed reaction is pyridoxamine 5'-phosphate + O2 + H2O = pyridoxal 5'-phosphate + H2O2 + NH4(+). It catalyses the reaction pyridoxine 5'-phosphate + O2 = pyridoxal 5'-phosphate + H2O2. The protein operates within cofactor metabolism; pyridoxal 5'-phosphate salvage; pyridoxal 5'-phosphate from pyridoxamine 5'-phosphate: step 1/1. It participates in cofactor metabolism; pyridoxal 5'-phosphate salvage; pyridoxal 5'-phosphate from pyridoxine 5'-phosphate: step 1/1. Functionally, catalyzes the oxidation of either pyridoxine 5'-phosphate (PNP) or pyridoxamine 5'-phosphate (PMP) into pyridoxal 5'-phosphate (PLP). The polypeptide is Pyridoxine/pyridoxamine 5'-phosphate oxidase (Ralstonia pickettii (strain 12J)).